A 474-amino-acid polypeptide reads, in one-letter code: MDLTINEKRVLAALIGSGPKAAEILAEKMDAALESVIQWAHLCADKGLVTLEKTVTEQAKLTEEGEKYAKEGLPERQILNSIDGSIPMSELTKNPLSKIAIGWLRKKNWVTIKDGIVFVNENTAVGEDELALKNPVPGTPACKELAKRGLVEVVEKTSWKIALTTDGEKIAKDGLDLREEVATLTREQILSGEWKSLPLRKYSIDKLPKKIYGGRVHPNQQILDEIRDLLFEMGFTEFHGSIVQNSFWNFDSLYQPQDHPAREMQDTFHLAEELPLPNGWEKIRDIHKFGGDTGSTGWGGEWSPEVGKKCVLRTHSTSLSIQYLAEHPNPPLKAFSISRVYRRETIDPTHLPEFEQLEGIVMDKDLHFGHLLGFFKEFFGRMGFEEVRFRPGYFPYTEPSVEPEVWVDGLGWVELGGAGIFRKEVTAPWGIDCPVLAWGLGVSRVSMLRMGLKDLRQLYKSDIDWIRASPVRRS.

Residues Thr-317, 356-358 (QLE), and Tyr-396 each bind L-phenylalanine. Glu-398 provides a ligand contact to Mg(2+). Residue Phe-421 coordinates L-phenylalanine.

This sequence belongs to the class-II aminoacyl-tRNA synthetase family. Phe-tRNA synthetase alpha subunit type 2 subfamily. In terms of assembly, tetramer of two alpha and two beta subunits. Mg(2+) serves as cofactor.

Its subcellular location is the cytoplasm. It carries out the reaction tRNA(Phe) + L-phenylalanine + ATP = L-phenylalanyl-tRNA(Phe) + AMP + diphosphate + H(+). In Methanocorpusculum labreanum (strain ATCC 43576 / DSM 4855 / Z), this protein is Phenylalanine--tRNA ligase alpha subunit.